The chain runs to 448 residues: Argininosuccinate synthase (448 aa).

ATP-binding positions include A17 to S25 and A43. L-citrulline is bound at residue Y99. ATP is bound by residues G129 and T131. Positions 131, 135, and 136 each coordinate L-aspartate. Residue N135 coordinates L-citrulline. D136 is an ATP binding site. L-citrulline contacts are provided by R139 and S192. D194 contacts ATP. Positions 201, 203, and 280 each coordinate L-citrulline.

This sequence belongs to the argininosuccinate synthase family. Type 2 subfamily. Homotetramer.

It is found in the cytoplasm. It catalyses the reaction L-citrulline + L-aspartate + ATP = 2-(N(omega)-L-arginino)succinate + AMP + diphosphate + H(+). Its pathway is amino-acid biosynthesis; L-arginine biosynthesis; L-arginine from L-ornithine and carbamoyl phosphate: step 2/3. The chain is Argininosuccinate synthase from Pectobacterium atrosepticum (strain SCRI 1043 / ATCC BAA-672) (Erwinia carotovora subsp. atroseptica).